The primary structure comprises 971 residues: Protein ALWAYS EARLY 1 (971 aa).

The span at 1–11 (MAPTRKSKSVN) shows a compositional bias: basic residues. Disordered stretches follow at residues 1–40 (MAPT…LADK), 117–137 (SESE…LKRK), 197–260 (IEDF…MFEN), 326–371 (GLLE…GLED), and 421–507 (PKES…KISL). The SANT domain maps to 40–98 (KLGPQWTKRELVRFYDAYRKYVGDWKKVAAAVRNNRSVEMVETLFCMNRAYLSLPEGTA). Basic and acidic residues-rich tracts occupy residues 209–219 (KQLDADDDASR), 332–350 (SSPH…KKSN), and 424–440 (STQD…EVDS). A compositionally biased stretch (polar residues) spans 450-470 (SSQGPAKQLKTAKTTVESSSA).

Expressed ubiquitously in vegetative and reproductive tissues.

It localises to the nucleus. The chain is Protein ALWAYS EARLY 1 (ALY1) from Arabidopsis thaliana (Mouse-ear cress).